Reading from the N-terminus, the 630-residue chain is Probable potassium transport system protein Kup (630 aa).

12 consecutive transmembrane segments (helical) span residues 17-37 (LAIAAIGVVFGDIGTSPLYSL), 51-71 (PSAILGVISLLFWAIILVVGI), 105-125 (ITGLMMALGIFGACMFYGDAV), 144-164 (PQLSHLVLPITIVILIALFWI), 175-195 (LFGPIMVLWFVTIAALGIYHI), 218-238 (VLLAYVVLGSVVLVLTGAEAL), 255-275 (YVLVMPSLVLNYFGQGALLLL), 283-303 (PFFLLAPQWAALPLVVLSTVA), 344-364 (IYVPVVNWLLLFVILCIVIGF), 374-394 (YGIAVTATMVITTILAAVVMV), 402-422 (LLVAMIIGVFLVIDLGFFGAN), and 428-448 (QGGWLPLGIGALLFFLLMTWY).

Belongs to the HAK/KUP transporter (TC 2.A.72) family.

The protein localises to the cell inner membrane. It carries out the reaction K(+)(in) + H(+)(in) = K(+)(out) + H(+)(out). Its function is as follows. Transport of potassium into the cell. Likely operates as a K(+):H(+) symporter. The polypeptide is Probable potassium transport system protein Kup (Burkholderia pseudomallei (strain 1710b)).